The following is a 176-amino-acid chain: MTNIRKSHPLMKIVNDAFIDLPAPSNISWWWNFGSLLGVCLMMQILTGLFLAMHYTSDTATAFNSVTHICRDVNYGWLLRYLHANGASMFFICLYLHIGRGLYYGSYTYTETWNVGIILLFAVMATAFMGYVLPWGQMSSWGATVITNLLSAIPYIGTDLVGWIWGGFSVDKATLT.

Helical transmembrane passes span Phe-33–Met-53, Trp-77–Ile-98, and Trp-113–Leu-133. Heme b contacts are provided by His-83 and His-97.

This sequence belongs to the cytochrome b family. As to quaternary structure, the cytochrome bc1 complex contains 11 subunits: 3 respiratory subunits (MT-CYB, CYC1 and UQCRFS1), 2 core proteins (UQCRC1 and UQCRC2) and 6 low-molecular weight proteins (UQCRH/QCR6, UQCRB/QCR7, UQCRQ/QCR8, UQCR10/QCR9, UQCR11/QCR10 and a cleavage product of UQCRFS1). This cytochrome bc1 complex then forms a dimer. The cofactor is heme b.

It is found in the mitochondrion inner membrane. Component of the ubiquinol-cytochrome c reductase complex (complex III or cytochrome b-c1 complex) that is part of the mitochondrial respiratory chain. The b-c1 complex mediates electron transfer from ubiquinol to cytochrome c. Contributes to the generation of a proton gradient across the mitochondrial membrane that is then used for ATP synthesis. This is Cytochrome b (MT-CYB) from Promops centralis (Big crested mastiff bat).